The primary structure comprises 753 residues: Nigerose phosphorylase (753 aa).

Residue 348–349 (WD) participates in substrate binding. The active-site Proton donor is the Glu-490. A substrate-binding site is contributed by 604–605 (KQ).

It belongs to the glycosyl hydrolase 65 family. Homodimer.

It localises to the cytoplasm. The catalysed reaction is nigerose + phosphate = beta-D-glucose 1-phosphate + D-glucose. Its activity is regulated as follows. Does not require divalent metal ions. Catalyzes the reversible phosphorolysis of nigerose. Also shows a weak activity on kojibiose. The protein is Nigerose phosphorylase of Lachnoclostridium phytofermentans (strain ATCC 700394 / DSM 18823 / ISDg) (Clostridium phytofermentans).